Consider the following 367-residue polypeptide: MASELCKTISVARLEKHKNLFLNYRNLHHFPLELLKDEGLQYLERLYMKRNSLTSLPENLAQKLPNLVELYLHSNNIVVVPEAIGSLVKLQCLDLSDNALEIVCPEIGRLRALRHLRLANNQLQFLPPEVGDLKELQTLDISTNRLLTLPERLHMCLSLQYLTVDRNRLWYVPRHLCQLPSLNELSMAGNRLAFLPLDLGRSRELQYVYVDNNIHLKGLPSYLYNKVIGCSGCGAPIQVSEVKLLSFSSGQRTVFLPAEVKAIGTEHDHVLPLQELAMRGLYHTYHSLLKDLNFLSPISLPRSLLELLHCPLGHCHRCSEPMFTIVYPKLFPLRETPMAGLHQWKTTVSFVAYCCSTQCLQTFDLLS.

LRR repeat units follow at residues Lys16–Lys36, Tyr42–Lys63, Asn66–Leu87, Lys89–Leu110, Ala112–Leu133, Glu135–Cys156, Ser158–Pro180, Ser181–Ser202, and Glu204–Lys226.

The protein is Leucine-rich repeat-containing protein 28 (LRRC28) of Homo sapiens (Human).